The following is a 580-amino-acid chain: WD repeat-containing protein 46 (580 aa).

The tract at residues 34-108 (SWKEYKKMKQ…QQEKMKVTKD (75 aa)) is disordered. 2 stretches are compositionally biased toward basic and acidic residues: residues 64 to 85 (TEGR…HDTG) and 98 to 108 (LQQEKMKVTKD). WD repeat units follow at residues 193 to 234 (AALD…YTYV), 235 to 272 (YDNL…NSFL), 274 to 312 (YVDV…HTNG), 315 to 354 (SLWS…GLDR), 357 to 396 (RIWD…NHVQ), and 399 to 436 (RGMH…IGHA).

As to quaternary structure, part of the small subunit (SSU) processome.

Its subcellular location is the nucleus. It localises to the nucleolus. Scaffold component of the nucleolar structure. Part of the small subunit (SSU) processome, first precursor of the small eukaryotic ribosomal subunit. Required for 18S rRNA processing. Plays a role in negative regulation of detoxification genes by inhibiting protein levels of transcription factor skn-1, leading to down-regulation of skn-1 target genes. The sequence is that of WD repeat-containing protein 46 from Caenorhabditis elegans.